Here is a 225-residue protein sequence, read N- to C-terminus: Techylectin-like protein (225 aa).

The Fibrinogen C-terminal domain maps to 32–225 (CPSPPLPIDC…WTEIKIKDVK (194 aa)). Cysteine 41 and cysteine 60 are oxidised to a cystine. A Cell attachment site motif is present at residues 75–77 (RGD). Ca(2+) is bound by residues aspartate 164 and threonine 170. A disulfide bridge links cysteine 172 with cysteine 185.

Expressed by the venom gland.

Its subcellular location is the secreted. Functionally, lectin involved in innate immunity. In Phoneutria nigriventer (Brazilian armed spider), this protein is Techylectin-like protein.